We begin with the raw amino-acid sequence, 176 residues long: MPTIRVQEADFDLGAEIAALRAGRPQIGAVASFIGTVRDINDGSGVSEMELEHYPGMTEKALANIVDAAMQRWDLIDALVIHRVGKLRPEDQIVLVAVASGHRGEAFAACEFIMDYLKSEAPFWKKEQTAQGARWVDARVTDERALARWGIVTDNASAATAQAASANDQNQKDRDA.

Residues 36-38, 102-103, Lys118, and 125-127 contribute to the substrate site; these read TVR, HR, and KKE.

Belongs to the MoaE family. In terms of assembly, heterotetramer of 2 MoaD subunits and 2 MoaE subunits. Also stable as homodimer. The enzyme changes between these two forms during catalysis.

The catalysed reaction is 2 [molybdopterin-synthase sulfur-carrier protein]-C-terminal-Gly-aminoethanethioate + cyclic pyranopterin phosphate + H2O = molybdopterin + 2 [molybdopterin-synthase sulfur-carrier protein]-C-terminal Gly-Gly + 2 H(+). Its pathway is cofactor biosynthesis; molybdopterin biosynthesis. Its function is as follows. Converts molybdopterin precursor Z into molybdopterin. This requires the incorporation of two sulfur atoms into precursor Z to generate a dithiolene group. The sulfur is provided by MoaD. This Ralstonia nicotianae (strain ATCC BAA-1114 / GMI1000) (Ralstonia solanacearum) protein is Molybdopterin synthase catalytic subunit (moaE).